The primary structure comprises 144 residues: Large ribosomal subunit protein uL13 (144 aa).

Belongs to the universal ribosomal protein uL13 family. Part of the 50S ribosomal subunit.

In terms of biological role, this protein is one of the early assembly proteins of the 50S ribosomal subunit, although it is not seen to bind rRNA by itself. It is important during the early stages of 50S assembly. The sequence is that of Large ribosomal subunit protein uL13 from Blochmanniella pennsylvanica (strain BPEN).